We begin with the raw amino-acid sequence, 2200 residues long: Bromodomain and WD repeat-containing DDB_G0285837 (2200 aa).

Disordered regions lie at residues 137–178 (GFND…SNTN), 194–245 (VTPT…TTPP), and 259–288 (DIQQQQQQQQQQQQQTISKSKNEDINNNNN). Low complexity-rich tracts occupy residues 161-176 (NNNNNNSSSSSSSNSN), 203-242 (NTTNTTTTTTATTTTTTTTTTTNNTNVQTTPTNTTNTTLT), and 259-273 (DIQQQQQQQQQQQQQ). 8 WD repeats span residues 352 to 391 (GHKAPTYCLQFDKSGRLYFTGSDDHLVKVWSTYSGRLIAT), 394 to 433 (GHLGDITDMCTSFDNSLLATASNDNVIRIWNLNSNQYDSI), 442 to 483 (SVNN…HVIS), 548 to 586 (GKTNEITGTTMNKGGTLIVASVDSSLKIWSTLFNPPKLV), 591 to 630 (GHPTTILALQYSHGSDAIVSGSYDGTVIIWRHSGGPKWDH), 653 to 691 (RSKATFKNVIWSHDDRFIITTDYNMIRVWNSLDGSFHLE), 694 to 736 (EHTS…KKFV), and 741 to 780 (GFQCQILDGCFSPDGQKFIVTNSTGKWFMFELGLGSDINN). 2 stretches are compositionally biased toward acidic residues: residues 918-933 (DDEIIFPSDPSDEDFN) and 955-968 (QDDDDDDDDDEDYD). 4 disordered regions span residues 918 to 1180 (DDEI…NHLT), 1262 to 1297 (NNNNNNNNNNNNNNNNNNNNNNNGVDDQQINSDDDD), 1461 to 1538 (ENNQ…NNNN), and 1662 to 1703 (NFNS…NNNN). The segment covering 974–1000 (MSTRKKSKIKADKRKKRLLKQSKKFTR) has biased composition (basic residues). Over residues 1052–1074 (GEIEMDDDDQYLNDNILDSDDND) the composition is skewed to acidic residues. The segment covering 1109–1132 (SSDNSSENDSSANGSDSDYSGSKS) has biased composition (low complexity). The span at 1133-1164 (NKNKRGDKSKRNKKGKKNVKNKKVQKRGRKKS) shows a compositional bias: basic residues. 2 stretches are compositionally biased toward low complexity: residues 1262-1292 (NNNNNNNNNNNNNNNNNNNNNNNGVDDQQIN) and 1461-1525 (ENNQ…NSLN). The region spanning 1722–1823 (EKIENLKKEM…HRISDILKEA (102 aa)) is the Bromo domain. Residues 1850 to 2200 (DKDDSQLDDE…RGRGRPPKSN (351 aa)) are disordered. The span at 1878 to 1888 (LANNNHGNNKS) shows a compositional bias: low complexity. The segment covering 1910-1920 (TGKNITRSLLS) has biased composition (polar residues). A compositionally biased stretch (low complexity) spans 1945–1958 (TTTTTTTTTTTSST). Acidic residues-rich tracts occupy residues 2016–2028 (DYNDDDDDDDNDG), 2057–2073 (EDEDEDDNNQEEDEEDY), and 2104–2113 (SEEEEDEDQS). Over residues 2114–2124 (DVNSNNNSDNE) the composition is skewed to low complexity. Over residues 2125–2138 (SGGEDGYSGEDGSE) the composition is skewed to acidic residues. Residues 2170–2185 (SFKNNNNNNNINNNVN) show a composition bias toward low complexity. Positions 2190–2200 (KRGRGRPPKSN) are enriched in basic residues.

The protein is Bromodomain and WD repeat-containing DDB_G0285837 of Dictyostelium discoideum (Social amoeba).